Here is a 327-residue protein sequence, read N- to C-terminus: Phenylalanine--tRNA ligase alpha subunit (327 aa).

Glu-252 serves as a coordination point for Mg(2+).

This sequence belongs to the class-II aminoacyl-tRNA synthetase family. Phe-tRNA synthetase alpha subunit type 1 subfamily. Tetramer of two alpha and two beta subunits. The cofactor is Mg(2+).

It localises to the cytoplasm. The catalysed reaction is tRNA(Phe) + L-phenylalanine + ATP = L-phenylalanyl-tRNA(Phe) + AMP + diphosphate + H(+). The polypeptide is Phenylalanine--tRNA ligase alpha subunit (Escherichia coli O127:H6 (strain E2348/69 / EPEC)).